The following is a 61-amino-acid chain: Small ribosomal subunit protein uS14B (61 aa).

4 residues coordinate Zn(2+): cysteine 24, cysteine 27, cysteine 40, and cysteine 43.

It belongs to the universal ribosomal protein uS14 family. Zinc-binding uS14 subfamily. In terms of assembly, part of the 30S ribosomal subunit. Contacts proteins S3 and S10. Zn(2+) serves as cofactor.

Its function is as follows. Binds 16S rRNA, required for the assembly of 30S particles and may also be responsible for determining the conformation of the 16S rRNA at the A site. This Mycobacterium bovis (strain ATCC BAA-935 / AF2122/97) protein is Small ribosomal subunit protein uS14B.